We begin with the raw amino-acid sequence, 212 residues long: ATP-dependent dethiobiotin synthetase BioD (212 aa).

12 to 17 (DCGKTF) provides a ligand contact to ATP. Threonine 16 contributes to the Mg(2+) binding site. Lysine 33 is a catalytic residue. A substrate-binding site is contributed by serine 37. Residues aspartate 50, 110-113 (EGAG), and 170-171 (NC) contribute to the ATP site. Positions 50 and 110 each coordinate Mg(2+).

Belongs to the dethiobiotin synthetase family. As to quaternary structure, homodimer. Requires Mg(2+) as cofactor.

It is found in the cytoplasm. The catalysed reaction is (7R,8S)-7,8-diammoniononanoate + CO2 + ATP = (4R,5S)-dethiobiotin + ADP + phosphate + 3 H(+). The protein operates within cofactor biosynthesis; biotin biosynthesis; biotin from 7,8-diaminononanoate: step 1/2. Functionally, catalyzes a mechanistically unusual reaction, the ATP-dependent insertion of CO2 between the N7 and N8 nitrogen atoms of 7,8-diaminopelargonic acid (DAPA, also called 7,8-diammoniononanoate) to form a ureido ring. In Legionella pneumophila subsp. pneumophila (strain Philadelphia 1 / ATCC 33152 / DSM 7513), this protein is ATP-dependent dethiobiotin synthetase BioD.